The chain runs to 61 residues: Small ribosomal subunit protein uS14 (61 aa).

Zn(2+)-binding residues include C24, C27, C40, and C43.

It belongs to the universal ribosomal protein uS14 family. Zinc-binding uS14 subfamily. In terms of assembly, part of the 30S ribosomal subunit. Contacts proteins S3 and S10. Requires Zn(2+) as cofactor.

Binds 16S rRNA, required for the assembly of 30S particles and may also be responsible for determining the conformation of the 16S rRNA at the A site. This Deinococcus deserti (strain DSM 17065 / CIP 109153 / LMG 22923 / VCD115) protein is Small ribosomal subunit protein uS14.